The following is a 314-amino-acid chain: Olfactory receptor 10A3 (314 aa).

Residues 1–25 (MKRQNQSCVVEFILLGFSNFPELQV) lie on the Extracellular side of the membrane. The N-linked (GlcNAc...) asparagine glycan is linked to Asn-5. Residues 26–46 (QLFGVFLVIYVVTLMGNAIIT) traverse the membrane as a helical segment. The Cytoplasmic segment spans residues 47 to 54 (VIISLNQS). Residues 55–75 (LHVPMYLFLLNLSVVEVSFSA) form a helical membrane-spanning segment. At 76–99 (VITPEMLVVLSTEKTMISFVGCFA) the chain is on the extracellular side. Cys-97 and Cys-189 are joined by a disulfide. The helical transmembrane segment at 100–120 (QMYFILLFGGTECFLLGAMAY) threads the bilayer. Residues 121 to 139 (DRFAAICHPLNYPVIMNRG) are Cytoplasmic-facing. Residues 140–160 (VFMKLVIFSWISGIMVATVQT) traverse the membrane as a helical segment. Residues 161–197 (TWVFSFPFCGPNEINHLFCETPPVLELVCADTFLFEI) are Extracellular-facing. The helical transmembrane segment at 198–217 (YAFTGTILIVMVPFLLILLS) threads the bilayer. Residues 218 to 237 (YIRVLFAILKMPSTTGRQKA) lie on the Cytoplasmic side of the membrane. The chain crosses the membrane as a helical span at residues 238–258 (FSTCASHLTSVTLFYGTANMT). Topologically, residues 259-271 (YLQPKSGYSPETK) are extracellular. A helical membrane pass occupies residues 272–292 (KLISLAYTLLTPLLNPLIYSL). Over 293–314 (RNSEMKRTLIKLWRRKVILHTF) the chain is Cytoplasmic.

It belongs to the G-protein coupled receptor 1 family.

The protein localises to the cell membrane. In terms of biological role, odorant receptor. The protein is Olfactory receptor 10A3 (OR10A3) of Homo sapiens (Human).